The sequence spans 392 residues: Mycofactocin maturase MftC (392 aa).

Positions 18–228 (LDAPICLTWE…YDWLVAKGDR (211 aa)) constitute a Radical SAM core domain. [4Fe-4S] cluster-binding residues include C32, C36, C39, C253, C260, C271, C312, C315, C321, C325, and C343. A compositionally biased stretch (basic and acidic residues) spans 354–367 (KERVKPKPSGDHSR). Residues 354–377 (KERVKPKPSGDHSRGTKQGPVALK) form a disordered region.

The protein belongs to the radical SAM superfamily. MftC family. It depends on [4Fe-4S] cluster as a cofactor.

It carries out the reaction [mycofactocin precursor peptide]-C-terminal glycyl-L-valyl-L-tyrosine + S-adenosyl-L-methionine = [mycofactocin precursor peptide]-C-terminal glycyl-N-{[2-(4-hydroxyphenyl)ethenyl]-3-methylbutanamide} + 5'-deoxyadenosine + L-methionine + CO2. The catalysed reaction is [mycofactocin precursor peptide]-C-terminal glycyl-N-{[2-(4-hydroxyphenyl)ethenyl]-3-methylbutanamide} + AH2 + S-adenosyl-L-methionine = [mycofactocin precursor peptide]-C-terminal glycyl-N-{5-[(4-hydroxyphenyl)methyl]-4,4-dimethyl-2-oxopyrrolidin-3-yl}acetamide + 5'-deoxyadenosine + L-methionine + A + H(+). Functionally, radical S-adenosylmethionine (SAM) enzyme responsible for the first step of the biosynthesis of the enzyme cofactor mycofactocin (MFT). Catalyzes two reactions at the C-terminus of the mycofactocin precursor (the MftA peptide). The first one is the oxidative decarboxylation of the C-terminal L-tyrosine of MftA, forming an unsaturated tyramine moiety. The second reaction is the cross-linking of the tyramine with the penultimate L-valine residue, forming a five-membered lactam ring. Its activity requires the presence of the MftB chaperone. Is required for the in vivo ethanol assimilation in M.smegmatis. This is Mycofactocin maturase MftC from Mycolicibacterium smegmatis (strain ATCC 700084 / mc(2)155) (Mycobacterium smegmatis).